We begin with the raw amino-acid sequence, 466 residues long: Argininosuccinate lyase (466 aa).

It belongs to the lyase 1 family. Argininosuccinate lyase subfamily.

The protein resides in the cytoplasm. The enzyme catalyses 2-(N(omega)-L-arginino)succinate = fumarate + L-arginine. It participates in amino-acid biosynthesis; L-arginine biosynthesis; L-arginine from L-ornithine and carbamoyl phosphate: step 3/3. The polypeptide is Argininosuccinate lyase (Brucella canis (strain ATCC 23365 / NCTC 10854 / RM-666)).